Here is a 504-residue protein sequence, read N- to C-terminus: Sodium-coupled neutral amino acid transporter 3 (504 aa).

Position 52 is a phosphoserine; by PKC (serine 52). Asparagine 73 is a glycosylation site (N-linked (GlcNAc...) asparagine). 5 consecutive transmembrane segments (helical) span residues 82-102, 105-125, 143-163, 186-206, and 212-232; these read GILG…LFLL, VALL…IVGI, AAAL…LYII, MDGN…LALM, and LGYS…AVIY. Cysteine 239 and cysteine 275 are disulfide-bonded. Asparagine 247 and asparagine 251 each carry an N-linked (GlcNAc...) asparagine glycan. A helical membrane pass occupies residues 287–307; that stretch reads AYTIPIMAFAFVCHPEVLPIY. A glycan (N-linked (GlcNAc...) asparagine) is linked at asparagine 323. Transmembrane regions (helical) follow at residues 324 to 344, 366 to 386, 408 to 428, 431 to 451, and 469 to 489; these read LSIA…YLTF, ILCV…IVLF, VLIA…APNI, IFGI…PAIF, and ILAL…LSFI.

It belongs to the amino acid/polyamine transporter 2 family. Post-translationally, phosphorylation at Ser-52 induces internalization and sequestration into an intracellular reservoir. During dephosphorylation by protein phosphatases, can recycle back to the plasma membrane and regain activity. Prolonged phosphorylation results in its degradation. In terms of tissue distribution, highly expressed in liver. Expressed in skeletal muscle. Expressed in kidney, heart and brain. Not detected in gut, lung or spleen. Expressed ubiquitously in hepatocytes in liver whereas in kidney expression is restricted to the medulla. Within brain, expressed in glial cells. In the cerebellum, expressed on Bergmann glial fibers in the molecular layer and astrocytes in the granule layer. Expressed in brain kidney and liver (at protein level). In the adult kidney, highly expressed in the outer strip of the outer medulla and medullary rays penetrating into the kidney cortex (at protein level).

It is found in the cell membrane. The protein localises to the basolateral cell membrane. The enzyme catalyses L-glutamine(out) + Na(+)(out) + H(+)(in) = L-glutamine(in) + Na(+)(in) + H(+)(out). It carries out the reaction L-asparagine(out) + Na(+)(out) + H(+)(in) = L-asparagine(in) + Na(+)(in) + H(+)(out). The catalysed reaction is L-histidine(out) + Na(+)(out) + H(+)(in) = L-histidine(in) + Na(+)(in) + H(+)(out). With respect to regulation, L-glutamine efflux and L-glutamine uptake are regulated by CO2/HCO3(-) through SLC4A4 leading to modulation of cytosolic pH and Na(+)concentration. Symporter that cotransports specific neutral amino acids and sodium ions, coupled to an H(+) antiporter activity. Mainly participates in the glutamate-GABA-glutamine cycle in brain where it transports L-glutamine from astrocytes in the intercellular space for the replenishment of both neurotransmitters glutamate and gamma-aminobutyric acid (GABA) in neurons. Also functions as the major influx transporter in ganglion cells mediating the uptake of glutamine. The transport activity is specific for L-glutamine, L-histidine and L-asparagine. The transport is electroneutral coupled to the cotransport of 1 Na(+) and the antiport of 1 H(+), pH dependent, saturable, Li(+) tolerant and functions in both direction depending on the concentration gradients of its substrates and cotransported ions. Also mediates an amino acid-gated H(+) conductance that is not stoichiometrically coupled to the amino acid transport but which influences the ionic gradients that drive the amino acid transport. In addition, may play a role in nitrogen metabolism, amino acid homeostasis, glucose metabolism and renal ammoniagenesis. The chain is Sodium-coupled neutral amino acid transporter 3 from Rattus norvegicus (Rat).